Reading from the N-terminus, the 206-residue chain is Small ribosomal subunit protein uS4 (206 aa).

The S4 RNA-binding domain occupies Gly96–Lys156.

This sequence belongs to the universal ribosomal protein uS4 family. As to quaternary structure, part of the 30S ribosomal subunit. Contacts protein S5. The interaction surface between S4 and S5 is involved in control of translational fidelity.

Functionally, one of the primary rRNA binding proteins, it binds directly to 16S rRNA where it nucleates assembly of the body of the 30S subunit. In terms of biological role, with S5 and S12 plays an important role in translational accuracy. The protein is Small ribosomal subunit protein uS4 of Marinobacter nauticus (strain ATCC 700491 / DSM 11845 / VT8) (Marinobacter aquaeolei).